We begin with the raw amino-acid sequence, 962 residues long: Vacuolar membrane protease (962 aa).

At 1–15 (MVSSRRGFNPIAFTP) the chain is on the cytoplasmic side. Residues 16 to 36 (WPVTILSSLVYLALIIPIIVV) traverse the membrane as a helical segment. At 37-390 (HHLVPPAPKE…FQLNTLFGHS (354 aa)) the chain is on the vacuolar side. N-linked (GlcNAc...) asparagine glycosylation is found at asparagine 110 and asparagine 113. The Zn(2+) site is built by histidine 169 and aspartate 181. Glutamate 215 (proton acceptor) is an active-site residue. Glutamate 216, glutamate 241, and histidine 314 together coordinate Zn(2+). A helical membrane pass occupies residues 391–411 (VALLVVAPLLLIITSVALFAV). The Cytoplasmic segment spans residues 412-440 (DKMYMFSMYTYISESGGQVSLYGLRGMFR). The helical transmembrane segment at 441–461 (FPLILGISTALTIALAFLIMK) threads the bilayer. Over 462–472 (VNPFIIYSSPY) the chain is Vacuolar. A helical membrane pass occupies residues 473–493 (AVWSMMLSTCMFFAWFISCVA). Residues 494–503 (DFARPSALHR) are Cytoplasmic-facing. Residues 504 to 524 (AYSFSWMFGIMWVFLVIATVY) traverse the membrane as a helical segment. The Vacuolar portion of the chain corresponds to 525-534 (QKQHGIASSY). Residues 535–555 (FIVFYFAGVAVATWISYLELF) form a helical membrane-spanning segment. At 556–667 (GLPKTQDYAR…WSIYLMSSAW (112 aa)) the chain is on the cytoplasmic side. Residues 568-617 (GRLSDRTPSSDSHFLAPSADELPSSSSAAGRDFNPEDVEDEEPTESTSLL) form a disordered region. A compositionally biased stretch (acidic residues) spans 602–611 (PEDVEDEEPT). Residues 668–688 (ILQFLLVAPIVIILLGQLGLF) form a helical membrane-spanning segment. Topologically, residues 689-704 (LTSATYQIGADGGSQL) are vacuolar. The chain crosses the membrane as a helical span at residues 705–725 (VIYIGIAVLSVLILLPLFPFI). Residues 726 to 731 (HRFTYH) lie on the Cytoplasmic side of the membrane. The helical transmembrane segment at 732–752 (IPTFLLFILIGTLVYNLTAFP) threads the bilayer. Over 753 to 962 (FSHSNRLKLA…LVEGSYSFKL (210 aa)) the chain is Vacuolar. Residue asparagine 834 is glycosylated (N-linked (GlcNAc...) asparagine).

The protein belongs to the peptidase M28 family. Zn(2+) is required as a cofactor.

Its subcellular location is the vacuole membrane. Functionally, may be involved in vacuolar sorting and osmoregulation. This Arthroderma benhamiae (strain ATCC MYA-4681 / CBS 112371) (Trichophyton mentagrophytes) protein is Vacuolar membrane protease.